The sequence spans 127 residues: Flagellar hook-basal body complex protein FliE (127 aa).

The protein belongs to the FliE family.

Its subcellular location is the bacterial flagellum basal body. The polypeptide is Flagellar hook-basal body complex protein FliE (Leptospira interrogans serogroup Icterohaemorrhagiae serovar copenhageni (strain Fiocruz L1-130)).